Consider the following 467-residue polypeptide: Mothers against decapentaplegic homolog 2 (467 aa).

Residue Ser2 is modified to N-acetylserine. Thr8 carries the post-translational modification Phosphothreonine. Positions 10-176 constitute an MH1 domain; the sequence is PVVKRLLGWK…YQRVETPVLP (167 aa). Lys19 carries the N6-acetyllysine modification. Residues Cys74, Cys149, Cys161, and His166 each coordinate Zn(2+). The span at 207–217 shows a compositional bias: polar residues; the sequence is PAGIEPQSNYI. Residues 207-251 form a disordered region; it reads PAGIEPQSNYIPETPPPGYISEDGETSDQQLNQSMDTGSPAELSP. Thr220 carries the post-translational modification Phosphothreonine. The short motif at 221–225 is the PY-motif element; it reads PPPGY. Residues 233-243 show a composition bias toward polar residues; that stretch reads SDQQLNQSMDT. At Ser240 the chain carries Phosphoserine; by CAMK2. Residues Ser245, Ser250, Ser255, Ser458, Ser460, and Ser464 each carry the phosphoserine modification. An MH2 domain is found at 274–467; it reads WCSIAYYELN…SPSVRCSSMS (194 aa). Phosphoserine; by TGFBR1 occurs at positions 465 and 467.

It belongs to the dwarfin/SMAD family. In terms of assembly, monomer; in the absence of TGF-beta. Heterodimer; in the presence of TGF-beta. Forms a heterodimer with co-SMAD, SMAD4, in the nucleus to form the transactivation complex SMAD2/SMAD4. Found in a complex with SMAD3 and TRIM33 upon addition of TGF-beta. Identified in a complex that contains at least ZNF451, SMAD2, SMAD3 and SMAD4. Interacts (via the MH2 domain) with ZFYVE9; may form trimers with the SMAD4 co-SMAD. Interacts with TAZ/WWRT1. Interacts with FOXH1. Interacts with SNW1. Interacts with CREB-binding protein (CBP) and EP300. Interacts with SNON. Interacts with ALK4/ACVR1B. Interacts with SKOR1. Interacts with SKOR2. Interacts with PRDM16. Interacts (via MH2 domain) with LEMD3. Interacts with RBPMS. Interacts with WWP1. Interacts (dephosphorylated form, via the MH1 and MH2 domains) with RANBP3 (via its C-terminal R domain); the interaction results in the export of dephosphorylated SMAD3 out of the nucleus and termination of the TGF-beta signaling. Interacts with PDPK1 (via PH domain). Interacts with DAB2; the interactions are enhanced upon TGF-beta stimulation. Interacts with USP15. Interacts with PPP5C. Interacts with LDLRAD4 (via the SMAD interaction motif). Interacts (via MH2 domain) with PMEPA1 (via the SMAD interaction motif). Interacts with ZFHX3. Interacts with ZNF451. Interacts with SMURF2 when phosphorylated on Ser-465/467. Interacts with PPM1A. Interacts with TGF-beta. Interacts with TGFBR1. Interacts with TGIF. Interacts with SMAD3 and TRIM33. Interacts with ZNF580. Interacts with NEDD4L in response to TGF-beta. Interacts with HGS. Interacts with AIP1. Interacts with WWP1. Interacts with PML. Interacts weakly with ZNF8. Interacts (when phosphorylated) with RNF111; RNF111 acts as an enhancer of the transcriptional responses by mediating ubiquitination and degradation of SMAD2 inhibitors. Interacts with YAP1 (when phosphorylated at 'Ser-55'). Interacts when phosphorylated with IPO7; the interaction facilitates translocation of SMAD2 to the nucleus. Interacts with MTMR4; negatively regulates TGF-beta signaling through SMAD2 dephosphorylation and retention in endosomes. In terms of processing, in response to TGF-beta, phosphorylated on the C-terminal SXS motif by TGF-beta and activin type 1 receptor kinases, phosphorylation declines progressively in a KMT5A-dependent manner. Phosphorylation in this motif is required for interaction with a number of proteins including SMURF2, SNON and SMAD4 in response to TGF-beta. Dephosphorylated in this motif by PPM1A leading to disruption of the SMAD2/3-SMAD4 complex, nuclear export and termination of the TGF-beta signaling. In response to decorin, the naturally occurring inhibitor of TGF-beta signaling, phosphorylated on Ser-240 by CaMK2. Phosphorylated by MAPK3 upon EGF stimulation; which increases transcriptional activity and stability, and is blocked by calmodulin. Phosphorylated by PDPK1. Post-translationally, acetylated on Lys-19 by coactivators in response to TGF-beta signaling, which increases transcriptional activity. In response to TGF-beta, ubiquitinated by NEDD4L; which promotes its degradation. Monoubiquitinated, leading to prevent DNA-binding. Deubiquitination by USP15 alleviates inhibition and promotes activation of TGF-beta target genes. Ubiquitinated by RNF111, leading to its degradation: only SMAD2 proteins that are 'in use' are targeted by RNF111, RNF111 playing a key role in activating SMAD2 and regulating its turnover.

It is found in the cytoplasm. It localises to the nucleus. In terms of biological role, receptor-regulated SMAD (R-SMAD) that is an intracellular signal transducer and transcriptional modulator activated by TGF-beta (transforming growth factor) and activin type 1 receptor kinases. Binds the TRE element in the promoter region of many genes that are regulated by TGF-beta and, on formation of the SMAD2/SMAD4 complex, activates transcription. Promotes TGFB1-mediated transcription of odontoblastic differentiation genes in dental papilla cells. Positively regulates PDPK1 kinase activity by stimulating its dissociation from the 14-3-3 protein YWHAQ which acts as a negative regulator. The protein is Mothers against decapentaplegic homolog 2 (SMAD2) of Bos taurus (Bovine).